A 291-amino-acid chain; its full sequence is Protease HtpX homolog (291 aa).

2 helical membrane-spanning segments follow: residues 4 to 24 and 39 to 59; these read ILLFILTNVAVVAVLGIVASL and SALLGFALIMGFGGAIISLLI. A Zn(2+)-binding site is contributed by His144. Residue Glu145 is part of the active site. His148 provides a ligand contact to Zn(2+). 2 consecutive transmembrane segments (helical) span residues 159-179 and 199-219; these read LIQGVMNTFVVFLSRVIGYAV and VSTIVLDIVLGFAAAIVVAWF. Glu224 is a binding site for Zn(2+).

Belongs to the peptidase M48B family. It depends on Zn(2+) as a cofactor.

Its subcellular location is the cell inner membrane. The protein is Protease HtpX homolog of Polaromonas naphthalenivorans (strain CJ2).